Consider the following 254-residue polypeptide: Peptide methionine sulfoxide reductase A5 (254 aa).

Residues 1 to 26 (MARGSAAAAIAGVVWVLLLLVGVASG) form the signal peptide.

It belongs to the MsrA Met sulfoxide reductase family.

The catalysed reaction is L-methionyl-[protein] + [thioredoxin]-disulfide + H2O = L-methionyl-(S)-S-oxide-[protein] + [thioredoxin]-dithiol. The enzyme catalyses [thioredoxin]-disulfide + L-methionine + H2O = L-methionine (S)-S-oxide + [thioredoxin]-dithiol. Functionally, catalyzes the reduction of methionine sulfoxide (MetSO) to methionine in proteins. Plays a protective role against oxidative stress by restoring activity to proteins that have been inactivated by methionine oxidation. MSRA family specifically reduces the MetSO S-enantiomer. This chain is Peptide methionine sulfoxide reductase A5 (MSRA5), found in Oryza sativa subsp. japonica (Rice).